The sequence spans 667 residues: Probable oxidoreductase YyaE (667 aa).

One can recognise a 4Fe-4S Mo/W bis-MGD-type domain in the interval 2–59 (SKVHQSACPLNCWDSCGFLVTVDDGKVTKVDGDPNHPITEGKICGRGRMLETKTNSPD). [4Fe-4S] cluster-binding residues include Cys9, Cys13, Cys17, and Cys45.

Belongs to the prokaryotic molybdopterin-containing oxidoreductase family. It depends on Mo-bis(molybdopterin guanine dinucleotide) as a cofactor.

This is Probable oxidoreductase YyaE (yyaE) from Bacillus subtilis (strain 168).